A 73-amino-acid chain; its full sequence is Translation initiation factor IF-1 (73 aa).

The S1-like domain maps to M1–K73.

Belongs to the IF-1 family. As to quaternary structure, component of the 30S ribosomal translation pre-initiation complex which assembles on the 30S ribosome in the order IF-2 and IF-3, IF-1 and N-formylmethionyl-tRNA(fMet); mRNA recruitment can occur at any time during PIC assembly.

It localises to the cytoplasm. In terms of biological role, one of the essential components for the initiation of protein synthesis. Stabilizes the binding of IF-2 and IF-3 on the 30S subunit to which N-formylmethionyl-tRNA(fMet) subsequently binds. Helps modulate mRNA selection, yielding the 30S pre-initiation complex (PIC). Upon addition of the 50S ribosomal subunit IF-1, IF-2 and IF-3 are released leaving the mature 70S translation initiation complex. The polypeptide is Translation initiation factor IF-1 (Anaeromyxobacter dehalogenans (strain 2CP-C)).